The sequence spans 192 residues: Phosphoheptose isomerase (192 aa).

One can recognise an SIS domain in the interval 37-192; that stretch reads LADSFKQEGK…IQLVEKEMAK (156 aa). 52–54 is a binding site for substrate; it reads NGG. The Zn(2+) site is built by histidine 61 and glutamate 65. Substrate contacts are provided by residues glutamate 65, 93-94, 119-121, serine 124, and glutamine 172; these read ND and STS. 2 residues coordinate Zn(2+): glutamine 172 and histidine 180.

Belongs to the SIS family. GmhA subfamily. In terms of assembly, homotetramer. It depends on Zn(2+) as a cofactor.

The protein resides in the cytoplasm. It carries out the reaction 2 D-sedoheptulose 7-phosphate = D-glycero-alpha-D-manno-heptose 7-phosphate + D-glycero-beta-D-manno-heptose 7-phosphate. Its pathway is carbohydrate biosynthesis; D-glycero-D-manno-heptose 7-phosphate biosynthesis; D-glycero-alpha-D-manno-heptose 7-phosphate and D-glycero-beta-D-manno-heptose 7-phosphate from sedoheptulose 7-phosphate: step 1/1. Catalyzes the isomerization of sedoheptulose 7-phosphate in D-glycero-D-manno-heptose 7-phosphate. This is Phosphoheptose isomerase from Aeromonas salmonicida (strain A449).